The sequence spans 133 residues: Male-specific protein scotti (133 aa).

The disordered stretch occupies residues 11-57 (FPSNGLGNNNNDPNQQRGERPRQPHPDLGWILDAPNEPPRNRNPLLY). Residues 14-24 (NGLGNNNNDPN) are compositionally biased toward low complexity. The N-linked (GlcNAc...) asparagine glycan is linked to Asn83.

The protein belongs to the male-specific scotti family.

Functionally, post-meiotically transcribed gene that has a role in late spermiogenesis; required for actin cone progression during spermatid individualization. This is Male-specific protein scotti from Drosophila persimilis (Fruit fly).